Reading from the N-terminus, the 150-residue chain is MKIVVQRVKQASVTNESIHEEIGKGLCLLVGVGQDSTEKDVEAVAKKIVNARIFEDENGKLNLNVQQVGGAILSISQFTLYADVKKGNRPGFTNSKPPEEANRLYEAFNEALCQYGVEVKTGEFGTDMLVDIANDGPVTIIYESQDGKII.

The short motif at 136–137 is the Gly-cisPro motif, important for rejection of L-amino acids element; it reads GP.

This sequence belongs to the DTD family. In terms of assembly, homodimer.

It is found in the cytoplasm. The catalysed reaction is glycyl-tRNA(Ala) + H2O = tRNA(Ala) + glycine + H(+). It catalyses the reaction a D-aminoacyl-tRNA + H2O = a tRNA + a D-alpha-amino acid + H(+). Functionally, an aminoacyl-tRNA editing enzyme that deacylates mischarged D-aminoacyl-tRNAs. Also deacylates mischarged glycyl-tRNA(Ala), protecting cells against glycine mischarging by AlaRS. Acts via tRNA-based rather than protein-based catalysis; rejects L-amino acids rather than detecting D-amino acids in the active site. By recycling D-aminoacyl-tRNA to D-amino acids and free tRNA molecules, this enzyme counteracts the toxicity associated with the formation of D-aminoacyl-tRNA entities in vivo and helps enforce protein L-homochirality. The polypeptide is D-aminoacyl-tRNA deacylase (Staphylococcus carnosus (strain TM300)).